The primary structure comprises 589 residues: Cell fusion protein aff-1 (589 aa).

The N-terminal stretch at 1–20 (MRLWQWSIAVAICLVMVTEA) is a signal peptide. Over 21–537 (RLRRHHRKRR…MAHGGDFTEW (517 aa)) the chain is Extracellular. N-linked (GlcNAc...) asparagine glycosylation is found at asparagine 58, asparagine 138, asparagine 205, asparagine 335, asparagine 382, asparagine 392, and asparagine 408. A helical transmembrane segment spans residues 538-558 (LKIGIHIVIAVGLLLLLILLF). Residues 559–589 (TKCLVPLACCSLSIPFKNRNKKKKKKNSSDY) are Cytoplasmic-facing.

It belongs to the EFF/AFF cell fusogen family. Expressed in amphid sheath cells.

The protein resides in the cell membrane. The protein localises to the apical cell membrane. Required for cell fusion events during development including the fusion of anchor cells (AC), vulval A and vulval D rings, and late epidermal seam cells. Required for amphid sheath cell fusion induced by entry into dauer stage. This Caenorhabditis elegans protein is Cell fusion protein aff-1.